The chain runs to 265 residues: Regulator of G-protein signaling 9-binding protein (265 aa).

The disordered stretch occupies residues 1 to 37 (MAAPEVSSAGPNMLHPNSRTLTLRGKRGHAAEDSSQG). Residues 70 to 92 (TRLREELEESRKKAFDLSTDLSN) are a coiled coil. A disordered region spans residues 168 to 187 (KSPSSSRMHENQQRTERPCS). Basic and acidic residues predominate over residues 174-186 (RMHENQQRTERPC).

This sequence belongs to the RGS7BP/RGS9BP family.

In terms of biological role, regulator of G protein-coupled receptor (GPCR) signaling. Probably acts by regulating the activity of some 'R7' family protein (RGS6, RGS7, RGS9 and/or RGS11). This Xenopus tropicalis (Western clawed frog) protein is Regulator of G-protein signaling 9-binding protein (rgs9bp).